The primary structure comprises 338 residues: MTARDFKNYLEPLREGKNLLGFSGGLDSTCLFHLLVGENIAFDIALVDYSTQKQRLEIIQHAQKLAQTHHKKCYIHYAPKIARNFEMQARKVRYDFFETLIKEHSYKHLILAHHLNDRLEWFLMQLSKGAGLNTLLSFQAYEKRESYAIVRPLLYTPKDTLKTLAKDQKFFEDDSNSSLKFKRNCFRKHYANALMQHYSKGIIQSFKFLDKEKERLYPLIPVSQMHGITFFKHSHNALFMVDKILKKKGYVLSFLQKEEIKHHFFSLEIAQKFIIEKDKEHVFIAFKPQKTLSMPKDFKDRARRLDIPKRLRPVLYAEFLKQPTHDFLTRFKQSLMDL.

Position 23-28 (23-28) interacts with ATP; sequence SGGLDS.

It belongs to the tRNA(Ile)-lysidine synthase family.

The protein resides in the cytoplasm. It catalyses the reaction cytidine(34) in tRNA(Ile2) + L-lysine + ATP = lysidine(34) in tRNA(Ile2) + AMP + diphosphate + H(+). Its function is as follows. Ligates lysine onto the cytidine present at position 34 of the AUA codon-specific tRNA(Ile) that contains the anticodon CAU, in an ATP-dependent manner. Cytidine is converted to lysidine, thus changing the amino acid specificity of the tRNA from methionine to isoleucine. This Helicobacter pylori (strain J99 / ATCC 700824) (Campylobacter pylori J99) protein is tRNA(Ile)-lysidine synthase.